Here is a 104-residue protein sequence, read N- to C-terminus: Large ribosomal subunit protein uL24 (104 aa).

Belongs to the universal ribosomal protein uL24 family. As to quaternary structure, part of the 50S ribosomal subunit.

Its function is as follows. One of two assembly initiator proteins, it binds directly to the 5'-end of the 23S rRNA, where it nucleates assembly of the 50S subunit. One of the proteins that surrounds the polypeptide exit tunnel on the outside of the subunit. The sequence is that of Large ribosomal subunit protein uL24 from Afipia carboxidovorans (strain ATCC 49405 / DSM 1227 / KCTC 32145 / OM5) (Oligotropha carboxidovorans).